Reading from the N-terminus, the 453-residue chain is Transcription factor radR (453 aa).

Residues 1–30 (MPNNLQHQEGSYSLRSSNDVSPADDWTQTN) show a composition bias toward polar residues. The tract at residues 1 to 45 (MPNNLQHQEGSYSLRSSNDVSPADDWTQTNDPKEKKRIQNRVAQR) is disordered. The region spanning 30–62 (NDPKEKKRIQNRVAQRTYRNRIRARLEELENKI) is the bZIP domain. Residues 33–50 (KEKKRIQNRVAQRTYRNR) form a basic motif region. The segment at 51-58 (IRARLEEL) is leucine-zipper. Residues 160–184 (APRAAQARSIAPTSTGMHQISPSYG) form a disordered region. A compositionally biased stretch (polar residues) spans 170–181 (APTSTGMHQISP).

It belongs to the bZIP family.

Its subcellular location is the nucleus. Transcription factor that positively regulates the expression of the gene clusters that mediate the biosynthesis of pestheic acid, a diphenyl ether which is a biosynthetic precursor of the unique chloropupukeananes. The sequence is that of Transcription factor radR from Floropilus chiversii (Chaetomium chiversii).